A 180-amino-acid polypeptide reads, in one-letter code: Signal peptidase complex subunit 3 (180 aa).

Residues 1-11 lie on the Cytoplasmic side of the membrane; sequence MNTVLSRANSL. The chain crosses the membrane as a helical; Signal-anchor for type II membrane protein span at residues 12–32; sequence FAFSLSVMAALTFGCFITTAF. Residues 33–180 lie on the Lumenal side of the membrane; that stretch reads KERSVPVSIA…PDTYETTKSY (148 aa). Residue Asn-141 is glycosylated (N-linked (GlcNAc...) asparagine).

This sequence belongs to the SPCS3 family. Component of the signal peptidase complex paralog A (SPC-A) composed of a catalytic subunit SEC11A and three accessory subunits SPCS1, SPCS2 and SPCS3. Component of the signal peptidase complex paralog C (SPC-C) composed of a catalytic subunit SEC11C and three accessory subunits SPCS1, SPCS2 and SPCS3. The complex induces a local thinning of the ER membrane which is used to measure the length of the signal peptide (SP) h-region of protein substrates. This ensures the selectivity of the complex towards h-regions shorter than 18-20 amino acids. Expressed in hen oviduct (at protein level).

The protein localises to the endoplasmic reticulum membrane. Its function is as follows. Essential component of the signal peptidase complex (SPC) which catalyzes the cleavage of N-terminal signal sequences from nascent proteins as they are translocated into the lumen of the endoplasmic reticulum. Essential for the SPC catalytic activity, possibly by stabilizing and positioning the active center of the complex close to the lumenal surface. This chain is Signal peptidase complex subunit 3, found in Gallus gallus (Chicken).